We begin with the raw amino-acid sequence, 482 residues long: MSDKTKTNEGFSRRSFIGSAAVVTAGVAGLGAIDAASATQKTNRASTVKGGFDYDVVVVGGGFAGATAARECGLQGYRTLLLEARSRLGGRTFTSRFAGQEIEFGGAWVHWLQPHVWAEMQRYGLGVVEDPLTNLDKTLIMYNDGSVESISPDEFGKNIRIAFEKLCHDAWEVFPRPHEPMFTERARELDKSSVLDRIKTLGLSRLQQAQINSYMALYAGETTDKFGLPGVLKLFACGGWNYDAFMDTETHYRIQGGTIGLINAMLTDSGAEVRMSVPVTAVEQVNGGVKIKTDDDEIITAGVVVMTVPLNTYKHIGFTPALSKGKQRFIKEGQLSKGAKLYVHVKQNLGRVFAFADEQQPLNWVQTHDYSDELGTILSITIARKETIDVNDRDAVTREVQKMFPGVEVLGTAAYDWTADPFSLGAWAAYGVGQLSRLKDLQAAEGRILFAGAETSNGWHANIDGAVESGLRAGREVKQLLS.

The tat-type signal signal peptide spans 1-38; the sequence is MSDKTKTNEGFSRRSFIGSAAVVTAGVAGLGAIDAASA. 7 residues coordinate FAD: Ala64, Glu83, Ala84, Arg85, Arg91, Trp108, and Val279. Position 381 (Thr381) interacts with (S)-nicotine. Residues Ala453, Asn462, and Ile463 each contribute to the FAD site.

It belongs to the flavin monoamine oxidase family. Monomer in solution. Homodimer in solution. Forms homodimers in the crystal. The cofactor is FAD. Predicted to be exported by the Tat system. The position of the signal peptide cleavage has not been experimentally proven.

The protein localises to the periplasm. The enzyme catalyses (S)-nicotine + 2 Fe(III)-[cytochrome c] = N-methylmyosmine + 2 Fe(II)-[cytochrome c] + 2 H(+). It participates in alkaloid degradation; nicotine degradation. With respect to regulation, the catalytic rate is not significantly affected by pH. Functionally, involved in nicotine degradation. Catalyzes the conversion of nicotine to N-methylmyosmine. N-methylmyosmine undergoes spontaneous hydrolysis to form pseudooxynicotine (PN). S-nicotine is the optimal substrate. Has lower activity with some nicotine analogs, but shows no activity towards neurotransmitters, including serotonin, dopamine, and norepinephrine, nicotine metabolites and common neuroactive drugs. The enzyme is stereospecific with poor activity with (R)-nicotine as the substrate. The c-type cytochrome protein CycN is the physiological electron acceptor. O(2) is a poor electron acceptor. The sequence is that of Nicotine dehydrogenase from Pseudomonas putida (strain DSM 28022 / S16).